Consider the following 180-residue polypeptide: Dephospho-CoA kinase (180 aa).

In terms of domain architecture, DPCK spans 2 to 180 (VIGVTGKIGT…VMKLVWEKRE (179 aa)). Residue 10 to 15 (GTGKST) participates in ATP binding.

The protein belongs to the CoaE family.

Its subcellular location is the cytoplasm. It catalyses the reaction 3'-dephospho-CoA + ATP = ADP + CoA + H(+). Its pathway is cofactor biosynthesis; coenzyme A biosynthesis; CoA from (R)-pantothenate: step 5/5. Catalyzes the phosphorylation of the 3'-hydroxyl group of dephosphocoenzyme A to form coenzyme A. The chain is Dephospho-CoA kinase from Thermotoga maritima (strain ATCC 43589 / DSM 3109 / JCM 10099 / NBRC 100826 / MSB8).